The sequence spans 177 residues: MIGILNRWRQFGRRYFWPHLLLGMVAASLGVPSNLSGVPDQAAIPNTSSSQSRQNYGATNFSSLALLHDMHRRPSFSVDYWQQHALRTVIRHLSFALAPQVAYARVQEVAEAEQVQPSQIQQLALLNTLNALLTHEFKPPTIIRYTEQIKRPVLSLHKPGLWLAQVQGIRAGPANFI.

The signal sequence occupies residues 1-30 (MIGILNRWRQFGRRYFWPHLLLGMVAASLG).

This sequence belongs to the SecM family.

It localises to the cytoplasm. Its subcellular location is the cytosol. The protein localises to the periplasm. Regulates secA expression by translational coupling of the secM secA operon. Translational pausing at a specific Pro residue 5 residues before the end of the protein may allow disruption of a mRNA repressor helix that normally suppresses secA translation initiation. In Yersinia enterocolitica serotype O:8 / biotype 1B (strain NCTC 13174 / 8081), this protein is Secretion monitor.